A 165-amino-acid chain; its full sequence is Putative pre-16S rRNA nuclease (165 aa).

It belongs to the YqgF nuclease family.

Its subcellular location is the cytoplasm. In terms of biological role, could be a nuclease involved in processing of the 5'-end of pre-16S rRNA. This chain is Putative pre-16S rRNA nuclease, found in Sinorhizobium medicae (strain WSM419) (Ensifer medicae).